The sequence spans 402 residues: Heat stress transcription factor A-6a (402 aa).

A disordered region spans residues 1–28 (MLKPQTPRARRAAHPNSHMASSSSSSSL). The stretch at 212–258 (EVVSLKRDRAALRAEVIMLKQQYNACKSQLIAMEEMVRNIERRQQQT) forms a coiled coil. A hydrophobic repeat HR-A/B region spans residues 216 to 266 (LKRDRAALRAEVIMLKQQYNACKSQLIAMEEMVRNIERRQQQTIGFFAKVL). A Nuclear localization signal motif is present at residues 290–293 (KRQR). Residues 349-358 (DDVWEELDAL) carry the AHA motif.

This sequence belongs to the HSF family. Class A subfamily. Homotrimer. In terms of processing, exhibits temperature-dependent phosphorylation.

Its subcellular location is the nucleus. Its function is as follows. Transcriptional regulator that specifically binds DNA of heat shock promoter elements (HSE). The protein is Heat stress transcription factor A-6a (HSFA6B) of Oryza sativa subsp. japonica (Rice).